The chain runs to 1364 residues: MTFHFHIPLAFRDLLKSGGIGQYVVQEVLPVRHVDAQFAAFQTSFRTEAPLCILQHFDTLYSILHHFRSLDIAIKEDVLEVMVKVASRHANELPAILEDLNLSVPQRAAHLNALKMNCFILTQLIEAFEAETYKASLGSVEPSGKGKKAKSKPEGFSWESERESILQALTHLLQLDIRRLWSMSVVEEEFVSMMTSCCYKMMENPNIVMAKNKSTREALGHLLGVTVKRYNHMLSASVKVIQLLQHFEHLASVLVHTVSLWATEYGMKPVIGEIMREIGQKCSQDLSRESSGFKAFATFLTELAERIPAIMMPSISVLLDYLDGENYMMRNSVLTVMGEMVVRVLSGDQLEEAEKSSRDQFLDTLQEHLHDVNTYVRSCVIQIYNRIVQEKALPLSRFQSVVTLVVGRLFDKSVNVCKNAIQLLASFLANNPFTCKLSSVDLKVPLEKETKKLKEMREKYQGPKPVVVISPEEEWEAMLPEVLEAFKILQQESKEEEDIETEEIESSQHLREQILILLRKTSYKNSIRLTQKGIERFQEDPLFSEGDSEAKSELGILEKIFTEKKADLEQPTTKDQDDAQVNPTSEELPSQEVQNSDMDKQEMLVQYLSDAHHFALKIEEAIDVISKMMYETAVSVVQEVIEFFVTVSQFGVSQALLGVRRMLPLVWSKEPGVREAVLSAYRRLYLSSNGESERVKAQALVRSLSLLMVDSSAGILQCLEEIVSEFVQKGDIHPSVIQLLWEKFTQKSPCSEFERRAAVMLLGMMTRGQPEIVMSNLDTLVSVGLGEQVQKDYQLAREVCNCILKITDSQKQTLGKSTEPFRLPKDHSLFVCLTEAVAGGIGLSGLHWLPFKETAVRLVYELGEEPEEICSEILLRCSQNVLDGHQTQDEVPNVPAFLLTHLLSLAGDVALQQVVHLERAVSAELRRRRVLKEEQEAEKVGKQRKSKANESTMEEELGLVGASADDIEAELIRKICDTELLGGQQYLSAFLPLILRICNNPGRYSDPDLCTVATLALAKYMMISSDFCDTHLRLLFTLLEKSPLPSVRSNIMIALGDLSIRFPNLIEPWTPNLYARLRDPSREVRKTAGMVMTHLILKDMVKVKGQVSEMAVLLIESDQEISALARNFFNELSNKGNAVYNLLPDIISRLSDPDCGVEEEAFRTIMKQLLSYITKDKQTESLVEKMCHRFRTARTERQWRDLAHCLSLLPFSEKGLRKMQDCFDCYGDKLSDEAVYNSFLTTVAKMRRGAKPELKALIDEFEQKLSRCHNKGLENMDVPEEPSAESDAQPPKAKRPPLASVNVKKGKSEDDFQTPKPPASRKSRRKVAVNFSSDEESDLEAELSEAETPKNPTPIRRTARSRAK.

An interaction with XCAP-E and XCAP-C region spans residues 1–588 (MTFHFHIPLA…AQVNPTSEEL (588 aa)). A compositionally biased stretch (basic and acidic residues) spans 567 to 577 (DLEQPTTKDQD). Disordered stretches follow at residues 567 to 596 (DLEQ…VQNS) and 1273 to 1364 (LENM…SRAK). Residues 579-596 (AQVNPTSEELPSQEVQNS) are compositionally biased toward polar residues. Thr1314 carries the post-translational modification Phosphothreonine; by CDK1. A Bipartite nuclear localization signal motif is present at residues 1317 to 1326 (PPASRKSRRK). The span at 1333-1345 (SDEESDLEAELSE) shows a compositional bias: acidic residues. Phosphothreonine; by CDK1 is present on residues Thr1348 and Thr1353.

It belongs to the CND1 (condensin subunit 1) family. Component of the condensin complex, which contains the XCAP-E/SMC2 and XCAP-C/SMC4 heterodimer, and three non SMC subunits that probably regulate the complex: XCAP-H/NCAPH, XCAP-D2/NCAPD2 and XCAP-G/NCAPG. Phosphorylated by CDK1. Its phosphorylation, as well as that of XCAP-H and XCAP-G subunits, activates the condensin complex and is required for chromosome condensation.

It localises to the nucleus. The protein resides in the cytoplasm. It is found in the chromosome. Its function is as follows. Regulatory subunit of the condensin complex, a complex required for conversion of interphase chromatin into mitotic-like condense chromosomes. The condensin complex probably introduces positive supercoils into relaxed DNA in the presence of type I topoisomerases and converts nicked DNA into positive knotted forms in the presence of type II topoisomerases. May target the condensin complex to DNA via its C-terminal domain. The chain is Condensin complex subunit 1 (ncapd2) from Xenopus laevis (African clawed frog).